Here is a 428-residue protein sequence, read N- to C-terminus: Glutamate-1-semialdehyde 2,1-aminomutase 1 (428 aa).

K267 is modified (N6-(pyridoxal phosphate)lysine).

The protein belongs to the class-III pyridoxal-phosphate-dependent aminotransferase family. HemL subfamily. As to quaternary structure, homodimer. The cofactor is pyridoxal 5'-phosphate.

The protein localises to the cytoplasm. It carries out the reaction (S)-4-amino-5-oxopentanoate = 5-aminolevulinate. It participates in porphyrin-containing compound metabolism; protoporphyrin-IX biosynthesis; 5-aminolevulinate from L-glutamyl-tRNA(Glu): step 2/2. The sequence is that of Glutamate-1-semialdehyde 2,1-aminomutase 1 from Staphylococcus aureus (strain Mu3 / ATCC 700698).